The sequence spans 104 residues: UPF0473 protein LGAS_0424 (104 aa).

This sequence belongs to the UPF0473 family.

This chain is UPF0473 protein LGAS_0424, found in Lactobacillus gasseri (strain ATCC 33323 / DSM 20243 / BCRC 14619 / CIP 102991 / JCM 1131 / KCTC 3163 / NCIMB 11718 / NCTC 13722 / AM63).